We begin with the raw amino-acid sequence, 67 residues long: uncharacterized protein (67 aa).

This is an uncharacterized protein from Escherichia coli (strain K12).